The primary structure comprises 492 residues: Endoglycoceramidase I (492 aa).

The first 14 residues, 1 to 14 (MRKTVVAFAAAIAA), serve as a signal peptide directing secretion. The N-palmitoyl cysteine moiety is linked to residue Cys15. A lipid anchor (S-diacylglycerol cysteine) is attached at Cys15. Substrate-binding positions include Lys61, Asp62, 131 to 133 (HQD), and 213 to 214 (NE). Glu214 functions as the Proton donor in the catalytic mechanism. The cysteines at positions 224 and 229 are disulfide-linked. Positions 265, 298, and 302 each coordinate substrate. Cys294 and Cys313 are disulfide-bonded. The active-site Nucleophile is the Glu339. Position 365 (Trp365) interacts with substrate. The tract at residues 467-492 (NRPGSAGAEVPDGPIETSSSGSSGSS) is disordered.

It belongs to the glycosyl hydrolase 5 (cellulase A) family.

It localises to the secreted. Its subcellular location is the membrane. It carries out the reaction an oligoglycosyl-(1-&gt;4)-beta-D-glucosyl-(1&lt;-&gt;1)-ceramide + H2O = an oligoglycosyl-(1-&gt;4)-D-glucose + an N-acyl-sphingoid base. It catalyses the reaction a ganglioside GM3 + H2O = N-acetyl-alpha-neuraminosyl-(2-&gt;3)-beta-D-galactosyl-(1-&gt;4)-D-glucose + an N-acyl-sphingoid base. The enzyme catalyses a ganglioside GM1 + H2O = beta-D-Gal-(1-&gt;3)-beta-D-GalNAc-(1-&gt;4)-[alpha-Neu5Ac-(2-&gt;3)]-beta-D-Gal-(1-&gt;4)-D-Glc + an N-acyl-sphingoid base. The catalysed reaction is a ganglioside Fuc-GM1 + H2O = alpha-Fuc-(1-&gt;2)-beta-Gal-(1-&gt;3)-beta-GalNAc-(1-&gt;4)-[alpha-Neu5Ac-(2-&gt;3)]-beta-Gal-(1-&gt;4)-Glc + an N-acyl-sphingoid base. It carries out the reaction a beta-D-galactosyl-(1-&gt;4)-beta-D-glucosyl-(1&lt;-&gt;1)-ceramide + H2O = lactose + an N-acyl-sphingoid base. Its function is as follows. Hydrolyzes glycosphingolipids; exhibits broad substrate specificity including monosialodihexosylganglioside (GM3), monosialotetrahexosylganglioside (GM1), fucosyl-GM1, lactosylceramide, globotriosylceramide, globotetraosylceramide, ganglioside GD1a, and ganglioside GD1b. No activity towards glucosylceramide and galactosylceramide. The sequence is that of Endoglycoceramidase I from Rhodococcus hoagii (strain 103S) (Rhodococcus equi).